We begin with the raw amino-acid sequence, 276 residues long: Large ribosomal subunit protein uL2 (276 aa).

2 disordered regions span residues 37 to 59 (QIQKSGRNNNGHITTRHKGGGHK) and 225 to 276 (VMNP…RHKR). A compositionally biased stretch (polar residues) spans 39–49 (QKSGRNNNGHI). Residues 50–59 (TTRHKGGGHK) are compositionally biased toward basic residues.

It belongs to the universal ribosomal protein uL2 family. Part of the 50S ribosomal subunit. Forms a bridge to the 30S subunit in the 70S ribosome.

One of the primary rRNA binding proteins. Required for association of the 30S and 50S subunits to form the 70S ribosome, for tRNA binding and peptide bond formation. It has been suggested to have peptidyltransferase activity; this is somewhat controversial. Makes several contacts with the 16S rRNA in the 70S ribosome. The polypeptide is Large ribosomal subunit protein uL2 (Ralstonia pickettii (strain 12J)).